Here is a 109-residue protein sequence, read N- to C-terminus: Aquaporin-2 (109 aa).

The Cytoplasmic portion of the chain corresponds to 1–6 (SIAFSR). A helical membrane pass occupies residues 7-27 (AVFSEFLATLLFVFFGLGSAL). The Extracellular portion of the chain corresponds to 28–35 (NWPQALPS). Residues 36 to 54 (VLQIAMAFGLAIGTLVQTL) form a helical membrane-spanning segment. Residues 55–59 (GHISG) lie on the Cytoplasmic side of the membrane. The discontinuously helical intramembrane region spans 60 to 69 (AHINPAVTVA). Positions 63-65 (NPA) match the NPA 1 motif. Residues 70–80 (CLVGCHVSFLR) are Cytoplasmic-facing. Residues 81 to 102 (ATFYVAAQLLGAVAGAALLHEL) form a helical membrane-spanning segment. Over 103 to 109 (TPPDIRG) the chain is Extracellular.

The protein belongs to the MIP/aquaporin (TC 1.A.8) family. Homotetramer. Serine phosphorylation is necessary and sufficient for expression at the apical membrane. Endocytosis is not phosphorylation-dependent. In terms of processing, N-glycosylated.

The protein localises to the apical cell membrane. It localises to the basolateral cell membrane. The protein resides in the cell membrane. Its subcellular location is the cytoplasmic vesicle membrane. It is found in the golgi apparatus. The protein localises to the trans-Golgi network membrane. It catalyses the reaction H2O(in) = H2O(out). The catalysed reaction is glycerol(in) = glycerol(out). Forms a water-specific channel that provides the plasma membranes of renal collecting duct with high permeability to water, thereby permitting water to move in the direction of an osmotic gradient. Plays an essential role in renal water homeostasis. Could also be permeable to glycerol. The protein is Aquaporin-2 of Amblysomus hottentotus (Hottentot golden mole).